A 293-amino-acid chain; its full sequence is MPSIEFDDSKPSWADQVEEEGDEGSLPSPKETVKGNIKTVTEYKIDDDGQKFKIIRTFKIETRKASKAVARRKNWKKFGNSEYDAPGPNVATTTVSDDVFMTFISSKEDLNAQDQDEDPMNKLKGQKIVSCRICKGDHWTTRCPYKDTLGPMQKELAEQLGLSTGEKEKAAEPEPAQPVQNKTGKYVPPSLRDGGTRRGESMQPNRRADDNATIRVTNLSEDTRETDLQELFRPFGSISRIYLAKDKNTGQSKGFAFISFHRREDAARAIAGVSGFGYDHLILNVEWAKPSNN.

2 disordered regions span residues 1–32 (MPSI…PKET) and 163–206 (STGE…QPNR). The span at 194-206 (GGTRRGESMQPNR) shows a compositional bias: basic and acidic residues. One can recognise an RRM domain in the interval 212–290 (ATIRVTNLSE…LILNVEWAKP (79 aa)).

The protein belongs to the eIF-3 subunit G family. As to quaternary structure, component of the eukaryotic translation initiation factor 3 (eIF-3) complex, which is composed of 13 subunits: eif3a, eif3b, eif3c, eif3d, eif3e, eif3f, eif3g, eif3h, eif3i, eif3j, eif3k, eif3l and eif3m.

Its subcellular location is the cytoplasm. Its function is as follows. RNA-binding component of the eukaryotic translation initiation factor 3 (eIF-3) complex, which is involved in protein synthesis of a specialized repertoire of mRNAs and, together with other initiation factors, stimulates binding of mRNA and methionyl-tRNAi to the 40S ribosome. The eIF-3 complex specifically targets and initiates translation of a subset of mRNAs involved in cell proliferation. This subunit can bind 18S rRNA. The sequence is that of Eukaryotic translation initiation factor 3 subunit G (eif3g) from Danio rerio (Zebrafish).